The chain runs to 488 residues: GTPase Der (488 aa).

EngA-type G domains lie at 3–166 (PVVA…AEAM) and 199–372 (IKLA…DSAT). Residues 9–16 (GRPNVGKS), 56–60 (DTGGI), 118–121 (NKVD), 205–212 (GKPNVGKS), 252–256 (DTAGV), and 317–320 (NKWD) each bind GTP. A KH-like domain is found at 373–457 (RRVSTSMLTR…PIQLRFQEGD (85 aa)). The segment at 469–488 (MSQERRRKRALSHIKDRKTK) is disordered. Residues 473 to 488 (RRRKRALSHIKDRKTK) are compositionally biased toward basic residues.

It belongs to the TRAFAC class TrmE-Era-EngA-EngB-Septin-like GTPase superfamily. EngA (Der) GTPase family. Associates with the 50S ribosomal subunit.

Functionally, GTPase that plays an essential role in the late steps of ribosome biogenesis. This is GTPase Der from Shewanella putrefaciens (strain CN-32 / ATCC BAA-453).